The following is a 135-amino-acid chain: CDGSH iron-sulfur domain-containing protein 2B (135 aa).

The Lumenal segment spans residues 1-37; it reads MVLETISKIIKTQLPAYLKKFPLPETIGGFARLTVLD. A helical transmembrane segment spans residues 38–60; sequence WLRLLPLLGILTLLGYLTIRPFL. Topologically, residues 61–135 are cytoplasmic; it reads PKKKKQKDSL…GPLILKKKII (75 aa). [2Fe-2S] cluster-binding residues include Cys99, Cys101, Cys110, and His114.

This sequence belongs to the CISD protein family. CISD2 subfamily. As to quaternary structure, homodimer. [2Fe-2S] cluster is required as a cofactor.

It localises to the endoplasmic reticulum membrane. The protein resides in the mitochondrion outer membrane. Its function is as follows. Regulator of autophagy that contributes to antagonize becn1-mediated cellular autophagy at the endoplasmic reticulum. Participates in the interaction of bcl2 with becn1 and is required for bcl2-mediated depression of endoplasmic reticulum Ca(2+) stores during autophagy. The chain is CDGSH iron-sulfur domain-containing protein 2B (cisd2b) from Oncorhynchus mykiss (Rainbow trout).